The primary structure comprises 391 residues: Nucleosome assembly protein 1-like 1 (391 aa).

Positions 1–10 are enriched in basic and acidic residues; the sequence is MADIDNKEQS. The segment at 1–32 is disordered; the sequence is MADIDNKEQSELDQDLDDVEEVEEEETGEETK. The residue at position 2 (Ala2) is an N-acetylalanine. Ser10 carries the post-translational modification Phosphoserine. A compositionally biased stretch (acidic residues) spans 11–28; sequence ELDQDLDDVEEVEEEETG. Thr62 and Thr64 each carry phosphothreonine. Ser69 is subject to Phosphoserine. Lys116 is modified (N6-acetyllysine). The NAP1L motif motif lies at 125 to 150; that stretch reads YEPTEEECEWKPDEEDEISEELKEKA. The span at 132-143 shows a compositional bias: acidic residues; it reads CEWKPDEEDEIS. Residues 132–163 form a disordered region; sequence CEWKPDEEDEISEELKEKAKIEDEKKDEEKED. Ser143 carries the phosphoserine modification. The span at 144-163 shows a compositional bias: basic and acidic residues; it reads EELKEKAKIEDEKKDEEKED. The Nuclear localization signal motif lies at 273–279; it reads IKKKQKH. The span at 346–376 shows a compositional bias: acidic residues; the sequence is AIEDDDDDYDEEGEEADEEGEEEGDEENDPD. Positions 346-391 are disordered; it reads AIEDDDDDYDEEGEEADEEGEEEGDEENDPDYDPKKDQNPAECKQQ. 2 positions are modified to 5-glutamyl polyglycine: Glu359 and Glu360. Positions 377 to 391 are enriched in basic and acidic residues; sequence YDPKKDQNPAECKQQ. Cysteine methyl ester is present on Cys388. Cys388 carries the S-farnesyl cysteine lipid modification. Residues 389-391 constitute a propeptide, removed in mature form; it reads KQQ.

Belongs to the nucleosome assembly protein (NAP) family. Homodimer. The dimer binds strongly and sequentially to single and double H2A-H2B heterodimers. Interacts with ERCC6; this interaction increases ERCC6 processivity. Interacts with RAD54. Interacts with SETD1A. Post-translationally, polyglycylated by TTLL10 on glutamate residues, resulting in polyglycine chains on the gamma-carboxyl group. Both polyglutamylation and polyglycylation modifications can coexist on the same protein on adjacent residues, and lowering polyglycylation levels increases polyglutamylation, and reciprocally. In terms of processing, polyglutamylated by TTLL4 on glutamate residues, resulting in polyglutamate chains on the gamma-carboxyl group. Both polyglutamylation and polyglycylation modifications can coexist on the same protein on adjacent residues, and lowering polyglycylation levels increases polyglutamylation, and reciprocally.

It is found in the nucleus. The protein resides in the melanosome. The protein localises to the cytoplasm. In terms of biological role, histone chaperone that plays a role in the nuclear import of H2A-H2B and nucleosome assembly. Also participates in several important DNA repair mechanisms: greatly enhances ERCC6-mediated chromatin remodeling which is essential for transcription-coupled nucleotide excision DNA repair. Also stimulates homologous recombination (HR) by RAD51 and RAD54 which is essential in mitotic DNA double strand break (DSB) repair. Plays a key role in the regulation of embryonic neurogenesis. Promotes the proliferation of neural progenitors and inhibits neuronal differentiation during cortical development. Regulates neurogenesis via the modulation of RASSF10; regulates RASSF10 expression by promoting SETD1A-mediated H3K4 methylation at the RASSF10 promoter. This chain is Nucleosome assembly protein 1-like 1 (NAP1L1), found in Pongo abelii (Sumatran orangutan).